A 275-amino-acid chain; its full sequence is Undecaprenyl-diphosphatase (275 aa).

Transmembrane regions (helical) follow at residues 1-21, 41-61, 95-115, 118-138, 192-212, 223-243, and 255-275; these read MTTF…FLPV, ILFL…FVYA, LLII…KDLF, FYNS…LLWT, ATKF…VFEV, FTLT…VFAI, and LYYF…FSLL.

Belongs to the UppP family.

Its subcellular location is the cell membrane. It catalyses the reaction di-trans,octa-cis-undecaprenyl diphosphate + H2O = di-trans,octa-cis-undecaprenyl phosphate + phosphate + H(+). In terms of biological role, catalyzes the dephosphorylation of undecaprenyl diphosphate (UPP). Confers resistance to bacitracin. This chain is Undecaprenyl-diphosphatase, found in Alkaliphilus metalliredigens (strain QYMF).